We begin with the raw amino-acid sequence, 631 residues long: Phosphomethylpyrimidine synthase (631 aa).

Substrate-binding positions include asparagine 231, methionine 260, tyrosine 289, histidine 325, 345–347 (SRG), 386–389 (DGLR), and glutamate 425. A Zn(2+)-binding site is contributed by histidine 429. A substrate-binding site is contributed by tyrosine 452. Histidine 493 contributes to the Zn(2+) binding site. [4Fe-4S] cluster-binding residues include cysteine 573, cysteine 576, and cysteine 581.

The protein belongs to the ThiC family. In terms of assembly, homodimer. The cofactor is [4Fe-4S] cluster.

The catalysed reaction is 5-amino-1-(5-phospho-beta-D-ribosyl)imidazole + S-adenosyl-L-methionine = 4-amino-2-methyl-5-(phosphooxymethyl)pyrimidine + CO + 5'-deoxyadenosine + formate + L-methionine + 3 H(+). It participates in cofactor biosynthesis; thiamine diphosphate biosynthesis. Catalyzes the synthesis of the hydroxymethylpyrimidine phosphate (HMP-P) moiety of thiamine from aminoimidazole ribotide (AIR) in a radical S-adenosyl-L-methionine (SAM)-dependent reaction. This is Phosphomethylpyrimidine synthase from Acinetobacter baylyi (strain ATCC 33305 / BD413 / ADP1).